A 533-amino-acid chain; its full sequence is KDKGPPPKSRYEEELRTRGKTTITAANFIDVIITRQIASDKDARERGSQSSDSSSSLSSHRYEAPSDAIEVISPASSPAPPQEKPQTYQPEMVKANQAENESPQQYEGPLTHYRSQQGSPSPQQQPPLPPSSQAEGMGQVPRTHRLITLADHICQIITQDFARNQVPSQPSTSTFQTSPSALSSTPVRTKPSSRYSPESQSQTVLHPRPGPRVSPENLVDKSRGSRPGKSPERSHIPSEPYEPISPPQGPAVHEKQDSMLLLSQRGMDPAEQRSDSRSPGSISYLPYFFTKLESTSPMVKSKKQEIFRKLNSSGGGDSDMAAAQPGTEIFNLPAVTTSGAVSSRSHSFADPASNLGLEDIIRKALMGSFDDKVEDHGVVMPHPVGVVPGSASTSVVTSSETRRDEGDPSPHSGVCKPKLINKSNSRKSKSPIPGQNYLGTERPSSVSSVHSEGDYHRQTPGWAWEDRPSSTGSTQFPYNPLTIRMLSSTPPTPIACAPSAITQAAPHQQSRIWEREPAPLLSAQYETLSDSDD.

Residues 1–17 show a composition bias toward basic and acidic residues; the sequence is KDKGPPPKSRYEEELRT. The tract at residues 1-21 is disordered; the sequence is KDKGPPPKSRYEEELRTRGKT. Residues 29–33 carry the CORNR box 1 motif; it reads IDVII. Positions 37 to 144 are disordered; the sequence is IASDKDARER…EGMGQVPRTH (108 aa). Residues 38 to 47 are compositionally biased toward basic and acidic residues; sequence ASDKDARERG. Residues 48 to 59 show a composition bias toward low complexity; sequence SQSSDSSSSLSS. Residues Ser73 and Ser77 each carry the phosphoserine modification. The interval 130–209 is ID1; the sequence is PSSQAEGMGQ…QSQTVLHPRP (80 aa). The segment at 145 to 148 is required for interaction with RARA in the absence of its ligand; sequence RLIT. A CORNR box 2 motif is present at residues 153–157; the sequence is ICQII. Low complexity predominate over residues 165–180; it reads QVPSQPSTSTFQTSPS. The segment at 165–254 is disordered; that stretch reads QVPSQPSTST…SPPQGPAVHE (90 aa). Residues 181 to 204 are compositionally biased toward polar residues; sequence ALSSTPVRTKPSSRYSPESQSQTV. A phosphoserine mark is found at Ser196, Ser214, Ser230, Ser245, and Ser278. Over residues 218–236 the composition is skewed to basic and acidic residues; that stretch reads LVDKSRGSRPGKSPERSHI. The interval 306–367 is ID2; that stretch reads IFRKLNSSGG…EDIIRKALMG (62 aa). The short motif at 357–361 is the CORNR box 3 element; the sequence is LEDII. The segment covering 382–399 has biased composition (low complexity); it reads HPVGVVPGSASTSVVTSS. The interval 382–476 is disordered; sequence HPVGVVPGSA…RPSSTGSTQF (95 aa). The residue at position 492 (Thr492) is a Phosphothreonine. Ser529 and Ser531 each carry phosphoserine.

The protein belongs to the N-CoR nuclear receptor corepressors family. Forms a large corepressor complex that contains SIN3A/B and histone deacetylases HDAC1 and HDAC2. This complex associates with the thyroid receptor (TR) and the retinoid acid receptor (RAR) in the absence of ligand. Interacts directly with RARA; the interaction is facilitated with RARA trimethylation. Component of the N-Cor repressor complex, at least composed of CBFA2T3, HEXIM1, NCOR1, NCOR2, HDAC3, TBL1X, TBL1XR1, CORO2A and GPS2. Interacts with ZBTB33; the interaction serves to recruit the N-CoR complex to promoter regions containing methylated CpG dinucleotides. Interacts with TRIM28 and KDM3A. Interacts (via the RD1 domain) with BAZ1A (via its N-terminal); the interaction corepresses a number of NCOR1-regulated genes. Interacts with BCL6, C1D, DACH1, HEXIM1, HDAC7, RORA, RORC, SAP30, SIAH2, SIN3A and SIN3B. May interact with DEAF1. Interacts with RXRA. Interacts with SETD5. Interacts with VDR. Interacts with ZBTB7A. Interacts with AR. Interacts with HDAC3. Post-translationally, ubiquitinated; mediated by SIAH2 and leading to its subsequent proteasomal degradation.

The protein localises to the nucleus. Functionally, mediates transcriptional repression by certain nuclear receptors. Part of a complex which promotes histone deacetylation and the formation of repressive chromatin structures which may impede the access of basal transcription factors. Participates in the transcriptional repressor activity produced by BCL6. Recruited by ZBTB7A to the androgen response elements/ARE on target genes, negatively regulates androgen receptor signaling and androgen-induced cell proliferation. Mediates the NR1D1-dependent repression and circadian regulation of TSHB expression. The NCOR1-HDAC3 complex regulates the circadian expression of the core clock gene ARTNL/BMAL1 and the genes involved in lipid metabolism in the liver. The sequence is that of Nuclear receptor corepressor 1 (Ncor1) from Rattus norvegicus (Rat).